The chain runs to 374 residues: MFLTHLSLKNYRNYESETIEFANNVNIILGENAQGKTNMMEAIYVLAMAKSHRTTNDKDLIRWDEDYAKIEGKAMKKNGALSLELIISKKGKKAKCNHIEQQRLSQYVGHLNIVMFAPEDLNLVKGSPQVRRRFVDMEIGQVSPVYIHDLSQYQKLLQQRNHYLKMLQTREQQDETVLDILTEQLIPLAAKITLKRYEFLLLLQKWAAPIHHEISRGLETLQIQYRPSVDVSEKIELSRIIEAYSEKFATIKEREIQRGMTLAGPHRDDIAFSVNGKDVQIFGSQGQQRTTALSIKLAEIELIFSEIGDYPILLLDDVLSELDDFRQTHLLDTIRKKVQTFVTTTSIEGIEHDIIKEAAIYKVHSGHITAPLCD.

30–37 (GENAQGKT) lines the ATP pocket.

Belongs to the RecF family.

The protein resides in the cytoplasm. Its function is as follows. The RecF protein is involved in DNA metabolism; it is required for DNA replication and normal SOS inducibility. RecF binds preferentially to single-stranded, linear DNA. It also seems to bind ATP. The chain is DNA replication and repair protein RecF from Geobacillus sp. (strain WCH70).